Consider the following 313-residue polypeptide: GTPase Era (313 aa).

One can recognise an Era-type G domain in the interval 20-187; the sequence is RSGFVALIGA…MDYLAETLPE (168 aa). Positions 28-35 are G1; that stretch reads GATNAGKS. 28–35 serves as a coordination point for GTP; it reads GATNAGKS. The interval 54-58 is G2; it reads QTTRA. The segment at 75 to 78 is G3; it reads DTPG. Residues 75 to 79 and 137 to 140 contribute to the GTP site; these read DTPGI and NKVD. The tract at residues 137-140 is G4; it reads NKVD. The segment at 166–168 is G5; that stretch reads ISA. One can recognise a KH type-2 domain in the interval 218 to 295; it reads LHQELPYASH…HLFLFVKVRE (78 aa).

The protein belongs to the TRAFAC class TrmE-Era-EngA-EngB-Septin-like GTPase superfamily. Era GTPase family. In terms of assembly, monomer.

It is found in the cytoplasm. The protein localises to the cell inner membrane. In terms of biological role, an essential GTPase that binds both GDP and GTP, with rapid nucleotide exchange. Plays a role in 16S rRNA processing and 30S ribosomal subunit biogenesis and possibly also in cell cycle regulation and energy metabolism. This Rhizobium meliloti (strain 1021) (Ensifer meliloti) protein is GTPase Era.